The primary structure comprises 577 residues: Proline--tRNA ligase (577 aa).

The protein belongs to the class-II aminoacyl-tRNA synthetase family. ProS type 1 subfamily. In terms of assembly, homodimer.

Its subcellular location is the cytoplasm. It catalyses the reaction tRNA(Pro) + L-proline + ATP = L-prolyl-tRNA(Pro) + AMP + diphosphate. Its function is as follows. Catalyzes the attachment of proline to tRNA(Pro) in a two-step reaction: proline is first activated by ATP to form Pro-AMP and then transferred to the acceptor end of tRNA(Pro). As ProRS can inadvertently accommodate and process non-cognate amino acids such as alanine and cysteine, to avoid such errors it has two additional distinct editing activities against alanine. One activity is designated as 'pretransfer' editing and involves the tRNA(Pro)-independent hydrolysis of activated Ala-AMP. The other activity is designated 'posttransfer' editing and involves deacylation of mischarged Ala-tRNA(Pro). The misacylated Cys-tRNA(Pro) is not edited by ProRS. The polypeptide is Proline--tRNA ligase (Helicobacter pylori (strain HPAG1)).